The primary structure comprises 89 residues: MAHKKAGGSSRNGRDSKGKRLGIKAFGGERVIPGNIIARQRGTTWHPGLNVGMGTDHTLFAKIEGVVEFHDRANRTFISVRPVAAQAAE.

Positions 1 to 21 (MAHKKAGGSSRNGRDSKGKRL) are disordered.

It belongs to the bacterial ribosomal protein bL27 family.

The protein is Large ribosomal subunit protein bL27 of Bradyrhizobium sp. (strain ORS 278).